An 89-amino-acid polypeptide reads, in one-letter code: MISLMEARNLRKERTGVVLSNKMEKTITVAAKFKEKHPIYGKFVSKTKKYHAHDEKNECNVGDTVRIMETRPLSKTKRWRLVEIIERAK.

It belongs to the universal ribosomal protein uS17 family. In terms of assembly, part of the 30S ribosomal subunit.

In terms of biological role, one of the primary rRNA binding proteins, it binds specifically to the 5'-end of 16S ribosomal RNA. This is Small ribosomal subunit protein uS17 from Bacteroides fragilis (strain ATCC 25285 / DSM 2151 / CCUG 4856 / JCM 11019 / LMG 10263 / NCTC 9343 / Onslow / VPI 2553 / EN-2).